Reading from the N-terminus, the 207-residue chain is Probable nicotinate-nucleotide adenylyltransferase (207 aa).

The protein belongs to the NadD family.

The catalysed reaction is nicotinate beta-D-ribonucleotide + ATP + H(+) = deamido-NAD(+) + diphosphate. It participates in cofactor biosynthesis; NAD(+) biosynthesis; deamido-NAD(+) from nicotinate D-ribonucleotide: step 1/1. Its function is as follows. Catalyzes the reversible adenylation of nicotinate mononucleotide (NaMN) to nicotinic acid adenine dinucleotide (NaAD). In Desulfitobacterium hafniense (strain DSM 10664 / DCB-2), this protein is Probable nicotinate-nucleotide adenylyltransferase.